We begin with the raw amino-acid sequence, 957 residues long: ADAMTS-like protein 2 (957 aa).

A signal peptide spans 1–29; sequence MDGRRQHPHWAWSLLAVAVVAGGAAPTEA. Residues 47–106 form the TSP type-1 1 domain; that stretch reads AYWWGEWTKWTACSRSCGGGVTSQERHCLQQRRKSVPGTGNRTCVGTSKRYQLCRVQECP. 3 cysteine pairs are disulfide-bonded: C59-C100, C63-C105, and C74-C90. N-linked (GlcNAc...) asparagine glycans are attached at residues N87, N374, N435, N482, N518, N530, N539, and N550. A compositionally biased stretch (polar residues) spans 532–544; that stretch reads SSEAPFPNTSASP. Residues 532–568 form a disordered region; sequence SSEAPFPNTSASPPNLAGNRTHKARTRPKARKQGVSP. The segment covering 551 to 563 has biased composition (basic residues); sequence RTHKARTRPKARK. TSP type-1 domains are found at residues 570-624, 628-692, 694-742, 743-801, 803-857, and 859-914; these read DMYR…EFCA, CQPR…PACG, QWEM…TGPP, CDRQ…KNCP, HWLA…TCFE, and PCFK…QPCP. Residue N737 is glycosylated (N-linked (GlcNAc...) asparagine). A glycan (N-linked (GlcNAc...) asparagine) is linked at N813. The PLAC domain maps to 918-956; it reads PDDSCQDQPGTNCALAIKVNLCGHWYYSKACCRSCRPPH.

Interacts with LTBP1. Glycosylated. Can be O-fucosylated by POFUT2 on a serine or a threonine residue found within the consensus sequence C1-X(2)-(S/T)-C2-G of the TSP type-1 repeat domains where C1 and C2 are the first and second cysteine residue of the repeat, respectively. Fucosylated repeats can then be further glycosylated by the addition of a beta-1,3-glucose residue by the glucosyltransferase, B3GALTL. Fucosylation mediates the efficient secretion of ADAMTS family members. Can also be C-glycosylated with one or two mannose molecules on tryptophan residues within the consensus sequence W-X-X-W of the TPRs, and N-glycosylated. These other glycosylations can also facilitate secretion.

The protein localises to the secreted. This chain is ADAMTS-like protein 2 (Adamtsl2), found in Mus musculus (Mouse).